Here is a 566-residue protein sequence, read N- to C-terminus: Tetratricopeptide repeat protein 34 (566 aa).

Residues 1–29 (MLQRSPRAGPSRAQGRREAAETGGPTTQE) form a disordered region. TPR repeat units follow at residues 50–83 (EASR…RPQA), 178–211 (SESL…EPGN), 212–245 (VQAL…GPGT), 306–339 (PHWH…APTS), 341–373 (AARA…DAPD), 424–457 (ACHL…ALGD), 464–497 (AEDF…APSL), and 512–545 (ARMF…DPDH).

The protein is Tetratricopeptide repeat protein 34 (TTC34) of Homo sapiens (Human).